Reading from the N-terminus, the 146-residue chain is Snaclec jerdonibitin subunit beta (146 aa).

Positions 1 to 23 (MGRFIFVSFGLLVVFLSLSGTGA) are cleaved as a signal peptide. 3 disulfides stabilise this stretch: C25/C36, C53/C142, and C119/C134. The C-type lectin domain occupies 32–143 (YEGHCYRVFQ…CSKTYPFVCK (112 aa)).

It belongs to the snaclec family. As to quaternary structure, heterodimer of subunits alpha and beta; disulfide-linked. Expressed by the venom gland.

The protein resides in the secreted. In terms of biological role, snaclec that dose-dependently inhibits platelet aggregation induced by ristocetin or low-dose thrombin, but not by high-dose thrombin. Binds to GPIbalpha (GP1BA). In vivo, also dose-dependently induces thrombocytopenia of mice and platelet counts remains at very low level even after 18 hours intravenous injection. The polypeptide is Snaclec jerdonibitin subunit beta (Protobothrops jerdonii (Jerdon's pitviper)).